The following is a 206-amino-acid chain: Protein YmaB (206 aa).

The chain is Protein YmaB (ymaB) from Bacillus subtilis (strain 168).